The following is a 208-amino-acid chain: MAKVLYITAHPFNELVSNSMAAGKAFIETYQQHHPDDEVKHIDLFETYIPVIDKDVLTGWGKMSNGETLTDDEQMKVSRLSDILEEFLSADKYVFVTPMWNLSFPPVVKAYIDAISIAGKTFKYSAEGPQGLLTDKKVLHIQSRGGYYTEGPAADFEMGDRYLRTIMTFLGVPSYETIIIEGHNAEPHKTEEIKATSINNAEKLATTF.

FMN is bound by residues 17-19 (SNS), 99-102 (MWNL), and 143-146 (SRGG).

The protein belongs to the azoreductase type 1 family. In terms of assembly, homodimer. Requires FMN as cofactor.

It carries out the reaction 2 a quinone + NADH + H(+) = 2 a 1,4-benzosemiquinone + NAD(+). The catalysed reaction is N,N-dimethyl-1,4-phenylenediamine + anthranilate + 2 NAD(+) = 2-(4-dimethylaminophenyl)diazenylbenzoate + 2 NADH + 2 H(+). Functionally, quinone reductase that provides resistance to thiol-specific stress caused by electrophilic quinones. Its function is as follows. Also exhibits azoreductase activity. Catalyzes the reductive cleavage of the azo bond in aromatic azo compounds to the corresponding amines. The sequence is that of FMN-dependent NADH:quinone oxidoreductase from Staphylococcus aureus (strain Mu50 / ATCC 700699).